The primary structure comprises 198 residues: Recombination protein RecR (198 aa).

A C4-type zinc finger spans residues 57 to 72 (CAQCRTLTEHSLCEYC). Residues 80–175 (SLLCIVESPA…RTTRIAHGIP (96 aa)) enclose the Toprim domain.

The protein belongs to the RecR family.

Its function is as follows. May play a role in DNA repair. It seems to be involved in an RecBC-independent recombinational process of DNA repair. It may act with RecF and RecO. This is Recombination protein RecR from Methylococcus capsulatus (strain ATCC 33009 / NCIMB 11132 / Bath).